A 173-amino-acid polypeptide reads, in one-letter code: Ribosome maturation factor RimM (173 aa).

One can recognise a PRC barrel domain in the interval 96-169 (PDEFYDHQLE…LITIDPPDGL (74 aa)).

Belongs to the RimM family. In terms of assembly, binds ribosomal protein uS19.

It localises to the cytoplasm. An accessory protein needed during the final step in the assembly of 30S ribosomal subunit, possibly for assembly of the head region. Essential for efficient processing of 16S rRNA. May be needed both before and after RbfA during the maturation of 16S rRNA. It has affinity for free ribosomal 30S subunits but not for 70S ribosomes. In Mycolicibacterium gilvum (strain PYR-GCK) (Mycobacterium gilvum (strain PYR-GCK)), this protein is Ribosome maturation factor RimM.